The sequence spans 152 residues: Protein Smg homolog (152 aa).

The protein belongs to the Smg family.

This Bordetella petrii (strain ATCC BAA-461 / DSM 12804 / CCUG 43448) protein is Protein Smg homolog.